The primary structure comprises 296 residues: Fructose-bisphosphate aldolase class 1 (296 aa).

The Proton acceptor role is filled by E175. Residue K212 is the Schiff-base intermediate with dihydroxyacetone-P of the active site.

It belongs to the class I fructose-bisphosphate aldolase family.

It catalyses the reaction beta-D-fructose 1,6-bisphosphate = D-glyceraldehyde 3-phosphate + dihydroxyacetone phosphate. The protein operates within carbohydrate degradation; glycolysis; D-glyceraldehyde 3-phosphate and glycerone phosphate from D-glucose: step 4/4. This chain is Fructose-bisphosphate aldolase class 1 (fda), found in Staphylococcus carnosus (strain TM300).